The primary structure comprises 795 residues: Multiple C2 domain and transmembrane region protein 12 (795 aa).

3 consecutive C2 domains span residues 24 to 142 (RNPR…PQWY), 180 to 298 (VCAS…SAPA), and 341 to 463 (YSSD…TCSY). Asn-57, Asp-109, and Asn-113 together coordinate Ca(2+). The next 4 membrane-spanning stretches (helical) occupy residues 590–610 (CTPKFIALGVSFVFLFWEYYI), 612–632 (WLVTSWLVAYCIVLCIVVILL), 730–750 (FVLIILLALCYCSMLVVCLGW), and 752–772 (LHVRKCLIFVFICYWVQLPWF).

It belongs to the MCTP family. The cofactor is Ca(2+). In terms of tissue distribution, expressed in root vascular tissues and meristems. Observed in flowers.

The protein localises to the endoplasmic reticulum membrane. Its function is as follows. May function as a signaling molecule by regulating the trafficking of other regulators. This is Multiple C2 domain and transmembrane region protein 12 from Arabidopsis thaliana (Mouse-ear cress).